Reading from the N-terminus, the 160-residue chain is Phosphopantetheine adenylyltransferase (160 aa).

Position 9 (S9) interacts with substrate. Residues 9 to 10 and H17 contribute to the ATP site; that span reads SF. The substrate site is built by K41, L73, and R87. Residues 88–90, E98, and 123–129 each bind ATP; these read GLR and YTFLSSS.

Belongs to the bacterial CoaD family. Homohexamer. The cofactor is Mg(2+).

It is found in the cytoplasm. It carries out the reaction (R)-4'-phosphopantetheine + ATP + H(+) = 3'-dephospho-CoA + diphosphate. The protein operates within cofactor biosynthesis; coenzyme A biosynthesis; CoA from (R)-pantothenate: step 4/5. Reversibly transfers an adenylyl group from ATP to 4'-phosphopantetheine, yielding dephospho-CoA (dPCoA) and pyrophosphate. The sequence is that of Phosphopantetheine adenylyltransferase from Dictyoglomus turgidum (strain DSM 6724 / Z-1310).